The primary structure comprises 260 residues: Cytosolic Fe-S cluster assembly factor Nubp2 homolog 1 (260 aa).

An ATP-binding site is contributed by 14–21; the sequence is GKGGVGKS. The [4Fe-4S] cluster site is built by Cys188 and Cys191.

The protein belongs to the Mrp/NBP35 ATP-binding proteins family. NUBP2/CFD1 subfamily. In terms of assembly, heterotetramer of 2 Nubp1 and 2 Nubp2 chains. It depends on [4Fe-4S] cluster as a cofactor.

It is found in the cytoplasm. Component of the cytosolic iron-sulfur (Fe/S) protein assembly (CIA) machinery. Required for maturation of extramitochondrial Fe-S proteins. The Nubp1-Nubp2 heterotetramer forms a Fe-S scaffold complex, mediating the de novo assembly of an Fe-S cluster and its transfer to target apoproteins. The sequence is that of Cytosolic Fe-S cluster assembly factor Nubp2 homolog 1 from Drosophila yakuba (Fruit fly).